A 389-amino-acid polypeptide reads, in one-letter code: Transcription factor TGAL10 (389 aa).

Positions 80–110 are disordered; sequence DDQDNAAALQESPRHASDSFEQEASKPRDKI. The span at 91 to 110 shows a compositional bias: basic and acidic residues; sequence SPRHASDSFEQEASKPRDKI. Positions 107–151 constitute a bZIP domain; sequence RDKIQRRLAQNREAARKSRLRKKAYIQNLETSRMKLAHLEQEITR. The tract at residues 109–129 is basic motif; sequence KIQRRLAQNREAARKSRLRKK. A leucine-zipper region spans residues 135–149; that stretch reads LETSRMKLAHLEQEI. In terms of domain architecture, DOG1 spans 176–389; sequence VVTFEVEYAQ…LHVRRRAELG (214 aa). 2 disordered regions span residues 320-345 and 370-389; these read TSCDASPPPPPPEEEEPSSSAAGDGG and HRRSPPPTSHLHVRRRAELG. Over residues 380 to 389 the composition is skewed to basic residues; that stretch reads LHVRRRAELG.

The protein belongs to the bZIP family.

It is found in the nucleus. Its function is as follows. Transcriptional regulator involved in defense response. This chain is Transcription factor TGAL10, found in Oryza sativa subsp. japonica (Rice).